We begin with the raw amino-acid sequence, 231 residues long: Probable methylthioribulose-1-phosphate dehydratase (231 aa).

Cys90 provides a ligand contact to substrate. Residues His108 and His110 each coordinate Zn(2+). The active-site Proton donor/acceptor is Glu132. His188 is a Zn(2+) binding site.

It belongs to the aldolase class II family. MtnB subfamily. Zn(2+) serves as cofactor.

The protein localises to the cytoplasm. It carries out the reaction 5-(methylsulfanyl)-D-ribulose 1-phosphate = 5-methylsulfanyl-2,3-dioxopentyl phosphate + H2O. It participates in amino-acid biosynthesis; L-methionine biosynthesis via salvage pathway; L-methionine from S-methyl-5-thio-alpha-D-ribose 1-phosphate: step 2/6. In terms of biological role, catalyzes the dehydration of methylthioribulose-1-phosphate (MTRu-1-P) into 2,3-diketo-5-methylthiopentyl-1-phosphate (DK-MTP-1-P). This Anopheles gambiae (African malaria mosquito) protein is Probable methylthioribulose-1-phosphate dehydratase.